The chain runs to 562 residues: Probable tRNA (uracil-O(2)-)-methyltransferase (562 aa).

Residues 520–546 (VSRRQQTNPKKQEATNRPKQPCWMSLN) form a disordered region. The C3H1-type zinc-finger motif lies at 535–562 (NRPKQPCWMSLNHPDGCPLGPESCRYLH).

This sequence belongs to the TRM44 family.

The protein localises to the cytoplasm. The catalysed reaction is uridine(44) in tRNA(Ser) + S-adenosyl-L-methionine = 2'-O-methyluridine(44) in tRNA(Ser) + S-adenosyl-L-homocysteine + H(+). Its function is as follows. Probable adenosyl-L-methionine (AdoMet)-dependent tRNA (uracil-O(2)-)-methyltransferase. In Caenorhabditis briggsae, this protein is Probable tRNA (uracil-O(2)-)-methyltransferase.